Here is a 265-residue protein sequence, read N- to C-terminus: SPbeta prophage-derived uncharacterized protein YomU (265 aa).

Residues 238-265 (KADGTKGVVTSDEGTGSSQSSDLGGTTE) form a disordered region. A compositionally biased stretch (polar residues) spans 249 to 265 (DEGTGSSQSSDLGGTTE).

The protein is SPbeta prophage-derived uncharacterized protein YomU (yomU) of Bacillus subtilis (strain 168).